Consider the following 443-residue polypeptide: MITRFAPSPTGYLHVGNVRTALVCWLYARKQNGKFLLRFDDTDTQRSKDEYIREIENDLVWLNINWDSSFRQSSRFDRYEDVFNYLLKEGLIYPCYESKEELEFKRKMKLKLGLPPIYDRSALNLTQAEKDKYSERAPYFRFKIDQNQLISWNDEVRGKVSFNSENISDPIIRRVDGTYTYMLPSIIDDMDFNVTHIIRGEDHISNTAVQIQMLHALKASIPIFSHLSLLYSDDNKISKRVGGSSVKDMQSYGLEPMAINSYFAKIGTSNPVSVHTRMCGLIDSFDITTFSQAPTKFNIDDVLKLNPKVLCSMSFDDVRNRLQSFNITSPSFWNFVCGNIDKFSDIEGWAKICSGDMIPVIGQDDKDFIMLALNMLPQGEVRDNTWNLWISNIKQHTDRRAKNLFTPLRLALTGLSTGPELAKLLPLIGRVEIVRRLSYSEVQ.

The 'HIGH' region motif lies at 7 to 17; the sequence is PSPTGYLHVGN. The 'KMSKS' region signature appears at 236 to 240; sequence KISKR. Lysine 239 serves as a coordination point for ATP.

It belongs to the class-I aminoacyl-tRNA synthetase family. Glutamate--tRNA ligase type 1 subfamily. As to quaternary structure, monomer.

The protein resides in the cytoplasm. The catalysed reaction is tRNA(Glu) + L-glutamate + ATP = L-glutamyl-tRNA(Glu) + AMP + diphosphate. Its function is as follows. Catalyzes the attachment of glutamate to tRNA(Glu) in a two-step reaction: glutamate is first activated by ATP to form Glu-AMP and then transferred to the acceptor end of tRNA(Glu). In Ehrlichia chaffeensis (strain ATCC CRL-10679 / Arkansas), this protein is Glutamate--tRNA ligase 1.